A 503-amino-acid chain; its full sequence is 12-dehydrotetracycline 5-monooxygenase/anhydrotetracycline 6-monooxygenase (503 aa).

Residues Thr-13, 32–33 (ER), Leu-44, Gln-99, Val-123, Thr-160, Asp-288, and 301–302 (LN) each bind FAD.

Belongs to the PheA/TfdB FAD monooxygenase family. As to quaternary structure, monomer. It depends on FAD as a cofactor.

It catalyses the reaction 5a,11a-dehydrotetracycline + NADPH + O2 + H(+) = 5a,11a-dehydrooxytetracycline + NADP(+) + H2O. The enzyme catalyses anhydrotetracycline + NADPH + O2 + H(+) = 5a,11a-dehydrotetracycline + NADP(+) + H2O. It functions in the pathway antibiotic biosynthesis; oxytetracycline biosynthesis. Its function is as follows. Involved in the biosynthesis of the antibiotics oxytetracycline and tetracycline. OxyS starts by catalyzing the stereospecific hydroxylation of anhydrotetracycline at C(6) position to yield 5a,11a-dehydrotetracycline (12-dehydrotetracycline). If the released product is captured by OxyR, it is reduced to tetracycline. However, if the released product is recaptured by OxyS, it performs an additional hydroxylation at C(5), producing 5a,11a-dehydrooxytetracycline, which, following the action of OxyR becomes oxytetracycline. This chain is 12-dehydrotetracycline 5-monooxygenase/anhydrotetracycline 6-monooxygenase, found in Streptomyces rimosus subsp. rimosus (strain ATCC 10970 / DSM 40260 / JCM 4667 / NRRL 2234).